The following is a 401-amino-acid chain: Lipoyl synthase 1, mitochondrial (401 aa).

Residues 1–25 (MWSSSSSLCRNPSFRRAWLSTVTVT) constitute a mitochondrion transit peptide. Residues 49–79 (IDDFSSTNAPTTTTHYTSSNGSPIVRQKAAP) are disordered. Over residues 51 to 70 (DFSSTNAPTTTTHYTSSNGS) the composition is skewed to polar residues. Cys-117, Cys-122, Cys-128, Cys-148, Cys-152, Cys-155, and Ser-376 together coordinate [4Fe-4S] cluster. The region spanning 133-365 (EDQTATATIM…QETAMGMGFA (233 aa)) is the Radical SAM core domain.

The protein belongs to the radical SAM superfamily. Lipoyl synthase family. [4Fe-4S] cluster is required as a cofactor.

Its subcellular location is the mitochondrion. It catalyses the reaction [[Fe-S] cluster scaffold protein carrying a second [4Fe-4S](2+) cluster] + N(6)-octanoyl-L-lysyl-[protein] + 2 oxidized [2Fe-2S]-[ferredoxin] + 2 S-adenosyl-L-methionine + 4 H(+) = [[Fe-S] cluster scaffold protein] + N(6)-[(R)-dihydrolipoyl]-L-lysyl-[protein] + 4 Fe(3+) + 2 hydrogen sulfide + 2 5'-deoxyadenosine + 2 L-methionine + 2 reduced [2Fe-2S]-[ferredoxin]. It participates in protein modification; protein lipoylation via endogenous pathway; protein N(6)-(lipoyl)lysine from octanoyl-[acyl-carrier-protein]: step 2/2. Catalyzes the radical-mediated insertion of two sulfur atoms into the C-6 and C-8 positions of the octanoyl moiety bound to the lipoyl domains of lipoate-dependent enzymes, thereby converting the octanoylated domains into lipoylated derivatives. In Phaeodactylum tricornutum (strain CCAP 1055/1), this protein is Lipoyl synthase 1, mitochondrial.